Reading from the N-terminus, the 153-residue chain is Interleukin-4 (153 aa).

An N-terminal signal peptide occupies residues 1-24 (MGLTSQLLPPLFFLLACAGNFAHG). Cystine bridges form between C27–C151, C48–C89, and C70–C123. A glycan (N-linked (GlcNAc...) asparagine) is linked at N62. Residue N129 is glycosylated (N-linked (GlcNAc...) asparagine).

It belongs to the IL-4/IL-13 family.

It localises to the secreted. In terms of biological role, participates in at least several B-cell activation processes as well as of other cell types. It is a costimulator of DNA-synthesis. It induces the expression of class II MHC molecules on resting B-cells. It enhances both secretion and cell surface expression of IgE and IgG1. It also regulates the expression of the low affinity Fc receptor for IgE (CD23) on both lymphocytes and monocytes. Positively regulates IL31RA expression in macrophages. Stimulates autophagy in dendritic cells by interfering with mTORC1 signaling and through the induction of RUFY4. In Macaca mulatta (Rhesus macaque), this protein is Interleukin-4 (IL4).